The sequence spans 63 residues: Sec-independent protein translocase protein TatA (63 aa).

The chain crosses the membrane as a helical span at residues 1–21; the sequence is MGSFSMWHWLIVLVIVLLLFG. Residues 42-63 form a disordered region; sequence GMTDDDAPDTAKTVDHKADETK. A compositionally biased stretch (basic and acidic residues) spans 53–63; it reads KTVDHKADETK.

Belongs to the TatA/E family. The Tat system comprises two distinct complexes: a TatABC complex, containing multiple copies of TatA, TatB and TatC subunits, and a separate TatA complex, containing only TatA subunits. Substrates initially bind to the TatABC complex, which probably triggers association of the separate TatA complex to form the active translocon.

Its subcellular location is the cell inner membrane. Functionally, part of the twin-arginine translocation (Tat) system that transports large folded proteins containing a characteristic twin-arginine motif in their signal peptide across membranes. TatA could form the protein-conducting channel of the Tat system. In Rhizobium etli (strain CIAT 652), this protein is Sec-independent protein translocase protein TatA.